The following is a 325-amino-acid chain: Biotin synthase (325 aa).

The Radical SAM core domain occupies 51 to 280; that stretch reads FMGRKADLCT…NVYIRYAGGR (230 aa). Positions 69, 73, and 76 each coordinate [4Fe-4S] cluster. Residues Ser113, Cys145, Cys205, and Arg275 each contribute to the [2Fe-2S] cluster site.

This sequence belongs to the radical SAM superfamily. Biotin synthase family. As to quaternary structure, homodimer. [4Fe-4S] cluster serves as cofactor. It depends on [2Fe-2S] cluster as a cofactor.

It carries out the reaction (4R,5S)-dethiobiotin + (sulfur carrier)-SH + 2 reduced [2Fe-2S]-[ferredoxin] + 2 S-adenosyl-L-methionine = (sulfur carrier)-H + biotin + 2 5'-deoxyadenosine + 2 L-methionine + 2 oxidized [2Fe-2S]-[ferredoxin]. It functions in the pathway cofactor biosynthesis; biotin biosynthesis; biotin from 7,8-diaminononanoate: step 2/2. In terms of biological role, catalyzes the conversion of dethiobiotin (DTB) to biotin by the insertion of a sulfur atom into dethiobiotin via a radical-based mechanism. The protein is Biotin synthase of Clostridioides difficile (strain 630) (Peptoclostridium difficile).